We begin with the raw amino-acid sequence, 87 residues long: Large ribosomal subunit protein bL27 (87 aa).

Positions 1 to 21 (MAHKKGQGSTQNNRDSAGRRL) are disordered.

Belongs to the bacterial ribosomal protein bL27 family.

This Nautilia profundicola (strain ATCC BAA-1463 / DSM 18972 / AmH) protein is Large ribosomal subunit protein bL27.